Consider the following 100-residue polypeptide: NADH-quinone oxidoreductase subunit K (100 aa).

Transmembrane regions (helical) follow at residues 4–24 (LTHG…GLVI), 28–48 (LLFM…AFVV), and 60–80 (VMYI…LALL).

It belongs to the complex I subunit 4L family. NDH-1 is composed of 13 different subunits. Subunits NuoA, H, J, K, L, M, N constitute the membrane sector of the complex.

It is found in the cell inner membrane. It carries out the reaction a quinone + NADH + 5 H(+)(in) = a quinol + NAD(+) + 4 H(+)(out). Its function is as follows. NDH-1 shuttles electrons from NADH, via FMN and iron-sulfur (Fe-S) centers, to quinones in the respiratory chain. The immediate electron acceptor for the enzyme in this species is believed to be ubiquinone. Couples the redox reaction to proton translocation (for every two electrons transferred, four hydrogen ions are translocated across the cytoplasmic membrane), and thus conserves the redox energy in a proton gradient. This is NADH-quinone oxidoreductase subunit K from Salmonella agona (strain SL483).